A 381-amino-acid chain; its full sequence is Succinyl-diaminopimelate desuccinylase (381 aa).

H68 provides a ligand contact to Zn(2+). The active site involves D70. A Zn(2+)-binding site is contributed by D101. E135 (proton acceptor) is an active-site residue. The Zn(2+) site is built by E136, E164, and H350.

This sequence belongs to the peptidase M20A family. DapE subfamily. Homodimer. Zn(2+) serves as cofactor. Co(2+) is required as a cofactor.

It catalyses the reaction N-succinyl-(2S,6S)-2,6-diaminopimelate + H2O = (2S,6S)-2,6-diaminopimelate + succinate. Its pathway is amino-acid biosynthesis; L-lysine biosynthesis via DAP pathway; LL-2,6-diaminopimelate from (S)-tetrahydrodipicolinate (succinylase route): step 3/3. In terms of biological role, catalyzes the hydrolysis of N-succinyl-L,L-diaminopimelic acid (SDAP), forming succinate and LL-2,6-diaminopimelate (DAP), an intermediate involved in the bacterial biosynthesis of lysine and meso-diaminopimelic acid, an essential component of bacterial cell walls. The sequence is that of Succinyl-diaminopimelate desuccinylase from Neisseria meningitidis serogroup C (strain 053442).